A 3147-amino-acid chain; its full sequence is Bassianolide nonribosomal cyclodepsipeptide synthetase (3147 aa).

Polar residues predominate over residues 1–12; sequence MEPPNNANTGQL. The disordered stretch occupies residues 1–23; the sequence is MEPPNNANTGQLGPTLPNGTVDL. The interval 69 to 454 is condensation 1; the sequence is HVVYEIPEDV…INKLQSTDGS (386 aa). An adenylation 1 region spans residues 495–887; sequence DDTPNKPAVC…GRMDSQVKIR (393 aa). In terms of domain architecture, Carrier 1 spans 1015 to 1091; it reads PDASAGVTKL…SLQAAIGGSS (77 aa). Position 1052 is an O-(pantetheine 4'-phosphoryl)serine (Ser-1052). The tract at residues 1109-1538 is condensation 2; it reads SYSQGRLWFL…QTLISVVPLT (430 aa). The tract at residues 1567 to 1973 is adenylation 2; sequence FATQVASYPD…GRMDFQFKIR (407 aa). Residues 2041–2181 are S-adenosyl-L-methionine-dependent N-methyltransferase (MT); it reads TYTELDTVSS…FPTRDYLEQV (141 aa). Carrier domains follow at residues 2515 to 2589 and 2615 to 2689; these read FPLS…RQQL and APTT…EVSQ. An O-(pantetheine 4'-phosphoryl)serine mark is found at Ser-2549 and Ser-2649. The segment at 2735–3139 is condensation 3; that stretch reads QDVYLATHLQ…THLMEQVCNT (405 aa).

Belongs to the NRP synthetase family.

Its function is as follows. Bassianolide nonribosomal synthetase that mediates the biosynthesis of bassianolide (BSL), a non-ribosomal cyclodepsipeptide that shows insecticidal and cancer cell antiproliferative activity. BSLS first catalyzes the iterative synthesis of an enzyme-bound dipeptidol monomer intermediate from D-2-hydroxyisovalerate and L-leucine before performing the condensation and cyclization of 4 dipeptidol monomers to yield the cyclic tetrameric ester bassianolide. The N-methyltransferase MT domain is responsible for the methylation of the leucine residues of bassianolide. BSLS is flexible with both the amino acid and hydroxyl acid precursors, and produces bassianolide as the major product (containing N-methyl-L-Leu), together with small amounts of beauvericin and its analogs beauvericins A-C (containing N-methyl-L-Phe). The chain is Bassianolide nonribosomal cyclodepsipeptide synthetase from Beauveria bassiana (strain ARSEF 2860) (White muscardine disease fungus).